The chain runs to 252 residues: Type III pantothenate kinase (252 aa).

Asp6–Lys13 contributes to the ATP binding site. Substrate contacts are provided by residues Tyr93 and Gly100–Arg103. Residue Asp102 is the Proton acceptor of the active site. Position 126 (Thr126) interacts with ATP. Thr179 lines the substrate pocket.

This sequence belongs to the type III pantothenate kinase family. In terms of assembly, homodimer. The cofactor is NH4(+). K(+) serves as cofactor.

The protein localises to the cytoplasm. The catalysed reaction is (R)-pantothenate + ATP = (R)-4'-phosphopantothenate + ADP + H(+). The protein operates within cofactor biosynthesis; coenzyme A biosynthesis; CoA from (R)-pantothenate: step 1/5. Functionally, catalyzes the phosphorylation of pantothenate (Pan), the first step in CoA biosynthesis. In Cellvibrio japonicus (strain Ueda107) (Pseudomonas fluorescens subsp. cellulosa), this protein is Type III pantothenate kinase.